The following is a 186-amino-acid chain: Early nodulin-like protein 13 (186 aa).

The first 23 residues, 1 to 23 (MAQRTLVATFFLIFFLLTNLVCS), serve as a signal peptide directing secretion. The region spanning 24–128 (KEIIVGGKTS…GEKLHIVVMS (105 aa)) is the Phytocyanin domain. The cysteines at positions 82 and 116 are disulfide-linked. Residues Asn-83 and Asn-90 are each glycosylated (N-linked (GlcNAc...) asparagine). Ala-165 carries GPI-anchor amidated alanine lipidation. A propeptide spans 166–186 (SSLTRQVGVLGFVGLLAIVLL) (removed in mature form).

It belongs to the early nodulin-like (ENODL) family. As to expression, mostly expressed in seedlings, siliques and flowers, and, to a lower extent, in roots, stems and seeds, but barely in leaves.

The protein localises to the cell membrane. Its function is as follows. May act as a carbohydrate transporter. Required, together with ENODL11, ENODL12, ENODL13, ENODL14 and ENODL15, for male-female communication and pollen tube reception and burst at the synergid cell surface of the female gametophyte. This Arabidopsis thaliana (Mouse-ear cress) protein is Early nodulin-like protein 13.